We begin with the raw amino-acid sequence, 163 residues long: Cytochrome c-type biogenesis protein CcmE (163 aa).

Topologically, residues 1-8 are cytoplasmic; it reads MNPRRKKR. The chain crosses the membrane as a helical; Signal-anchor for type II membrane protein span at residues 9-29; sequence LTIILAISAGLAAVIGLVLYA. Over 30–163 the chain is Periplasmic; the sequence is LSQNIDLFYT…TEAQLKGSKQ (134 aa). Heme-binding residues include H131 and Y135.

The protein belongs to the CcmE/CycJ family.

It is found in the cell inner membrane. In terms of biological role, heme chaperone required for the biogenesis of c-type cytochromes. Transiently binds heme delivered by CcmC and transfers the heme to apo-cytochromes in a process facilitated by CcmF and CcmH. The polypeptide is Cytochrome c-type biogenesis protein CcmE (Aeromonas hydrophila subsp. hydrophila (strain ATCC 7966 / DSM 30187 / BCRC 13018 / CCUG 14551 / JCM 1027 / KCTC 2358 / NCIMB 9240 / NCTC 8049)).